A 64-amino-acid polypeptide reads, in one-letter code: MPKMKTNSAASKRVRVTGSGKLMHAGSAMRHNLEHKSARKRRELKADGVLATSQSKNMKKLLGR.

The span at 1-10 (MPKMKTNSAA) shows a compositional bias: polar residues. A disordered region spans residues 1 to 64 (MPKMKTNSAA…SKNMKKLLGR (64 aa)).

The protein belongs to the bacterial ribosomal protein bL35 family.

This chain is Large ribosomal subunit protein bL35, found in Bifidobacterium adolescentis (strain ATCC 15703 / DSM 20083 / NCTC 11814 / E194a).